The primary structure comprises 328 residues: MDMDALTTLPIKKHTALLNRFPETRFVTQLAKKRASWIVFGHYLTPAQFEDMDFFTNRFNAILDMWKVGRYEVALMDGELTSEHETILKALELDYARIQDVPDLTKPGLIVLDMDSTAIQIECIDEIAKLAGVGEEVAEVTERAMQGELDFEQSLRLRVSKLKDAPEQILSQVRETLPLMPELPELVATLHAFGWKVAIASGGFTYFSDYLKEQLSLDYAQSNTLEIVSGKLTGQVLGEVVSAQTKADILLTLAQQYDVEIHNTVAVGDGANDLVMMAAAGLGVAYHAKPKVEAKAQTAVRFAGLGGVVCILSAALVAQQKLSWKSKP.

Asp113 functions as the Nucleophile in the catalytic mechanism. Mg(2+) is bound by residues Asp113 and Asp115. Asp115 acts as the Proton donor in catalysis. Substrate contacts are provided by residues Glu122, Arg158, 201 to 202, and Lys246; that span reads SG. Asp269 is a binding site for Mg(2+). Asn272 lines the substrate pocket.

The protein belongs to the HAD-like hydrolase superfamily. SerB family. Requires Mg(2+) as cofactor.

The catalysed reaction is O-phospho-L-serine + H2O = L-serine + phosphate. It carries out the reaction O-phospho-D-serine + H2O = D-serine + phosphate. It functions in the pathway amino-acid biosynthesis; L-serine biosynthesis; L-serine from 3-phospho-D-glycerate: step 3/3. This Vibrio cholerae serotype O1 (strain ATCC 39315 / El Tor Inaba N16961) protein is Phosphoserine phosphatase.